The chain runs to 460 residues: A-type ATP synthase subunit B (460 aa).

Belongs to the ATPase alpha/beta chains family. As to quaternary structure, has multiple subunits with at least A(3), B(3), C, D, E, F, H, I and proteolipid K(x).

It localises to the cell membrane. Its function is as follows. Component of the A-type ATP synthase that produces ATP from ADP in the presence of a proton gradient across the membrane. The B chain is a regulatory subunit. This Methanosarcina acetivorans (strain ATCC 35395 / DSM 2834 / JCM 12185 / C2A) protein is A-type ATP synthase subunit B.